The chain runs to 169 residues: Photosystem I assembly protein Ycf3 (169 aa).

TPR repeat units follow at residues 35-68 (AFTY…ETDP), 72-105 (SYIL…NPSL), and 120-153 (GEQA…APGN).

It belongs to the Ycf3 family.

It localises to the plastid. Its subcellular location is the chloroplast thylakoid membrane. Its function is as follows. Essential for the assembly of the photosystem I (PSI) complex. May act as a chaperone-like factor to guide the assembly of the PSI subunits. This Pinus koraiensis (Korean pine) protein is Photosystem I assembly protein Ycf3.